Here is a 1340-residue protein sequence, read N- to C-terminus: TSET complex member tstE (1340 aa).

Low complexity predominate over residues 56–67; that stretch reads NQSQTSPNSNDG. Disordered regions lie at residues 56–75 and 110–131; these read NQSQ…GSGG and SGSG…GGGQ. WD repeat units lie at residues 208 to 246, 250 to 294, 345 to 384, and 397 to 436; these read VNQI…VIGK, DPTE…LQTI, GHKK…SFLN, and IEHS…NPQE. Positions 1216-1251 are enriched in polar residues; the sequence is KSHMSSTTTLRRSPSIENIRTTSTTFDSSKFNTDNQ. Residues 1216–1340 form a disordered region; sequence KSHMSSTTTL…TPTPTTTLSS (125 aa). Positions 1252–1275 are enriched in acidic residues; it reads ELFDDDSDDDSDSGADADVDSENE. Over residues 1286–1318 the composition is skewed to polar residues; it reads ASLQHNDNSSLTNITVTDNDSNLDQDITSNTGS. A compositionally biased stretch (low complexity) spans 1328-1340; sequence LSSTPTPTTTLSS.

As to quaternary structure, component of the TSET complex, a heterohexamer composed of tstA, tstB, tstC, tstD, tstE and tstF, which may act in plasma membrane turnover. tstA, tstB, tstC and tstD are likely to be the core complex members with tstE and tstF acting as associated scaffold proteins.

The polypeptide is TSET complex member tstE (Dictyostelium discoideum (Social amoeba)).